We begin with the raw amino-acid sequence, 338 residues long: Ferrochelatase (338 aa).

Histidine 210 and glutamate 291 together coordinate Fe cation.

It belongs to the ferrochelatase family.

It is found in the cytoplasm. The catalysed reaction is heme b + 2 H(+) = protoporphyrin IX + Fe(2+). It functions in the pathway porphyrin-containing compound metabolism; protoheme biosynthesis; protoheme from protoporphyrin-IX: step 1/1. Its function is as follows. Catalyzes the ferrous insertion into protoporphyrin IX. The polypeptide is Ferrochelatase (Helicobacter acinonychis (strain Sheeba)).